The primary structure comprises 261 residues: CD40 ligand (261 aa).

Topologically, residues 1-22 (MIETYSQPSPRSVAAGPPVSMK) are cytoplasmic. Residues 23 to 43 (IFMYLLTVFLITQMIGSALFA) traverse the membrane as a helical; Signal-anchor for type II membrane protein segment. Residues 44 to 240 (AYLHRRLDKI…LQPGASVFVN (197 aa)) lie on the Extracellular side of the membrane. A THD domain is found at 122-261 (IAAHVISEAS…GFTSFGLLKL (140 aa)). Cysteines 178 and 218 form a disulfide. Asn240 carries N-linked (GlcNAc...) asparagine glycosylation.

The protein belongs to the tumor necrosis factor family. In terms of assembly, homotrimer. Interacts with CD28. CD40 ligand, soluble form: Exists as either a monomer or a homotrimer. Forms a ternary complex between CD40 and integrins for CD40-CD40LG signaling. In terms of processing, the soluble form derives from the membrane form by proteolytic processing.

Its subcellular location is the cell membrane. The protein resides in the cell surface. The protein localises to the secreted. In terms of biological role, cytokine that acts as a ligand to CD40/TNFRSF5. Costimulates T-cell proliferation and cytokine production. Its cross-linking on T-cells generates a costimulatory signal which enhances the production of IL4 and IL10 in conjunction with the TCR/CD3 ligation and CD28 costimulation. Induces the activation of NF-kappa-B. Induces the activation of kinases MAPK8 and PAK2 in T-cells. Mediates B-cell proliferation in the absence of co-stimulus as well as IgE production in the presence of IL4. Involved in immunoglobulin class switching. Functionally, acts as a ligand for integrins, specifically ITGA5:ITGB1 and ITGAV:ITGB3; both integrins and the CD40 receptor are required for activation of CD40-CD40LG signaling, which have cell-type dependent effects, such as B-cell activation, NF-kappa-B signaling and anti-apoptotic signaling. The sequence is that of CD40 ligand (CD40LG) from Sus scrofa (Pig).